Reading from the N-terminus, the 366-residue chain is Histidinol-phosphate aminotransferase (366 aa).

An N6-(pyridoxal phosphate)lysine modification is found at lysine 231.

Belongs to the class-II pyridoxal-phosphate-dependent aminotransferase family. Histidinol-phosphate aminotransferase subfamily. The cofactor is pyridoxal 5'-phosphate.

The catalysed reaction is L-histidinol phosphate + 2-oxoglutarate = 3-(imidazol-4-yl)-2-oxopropyl phosphate + L-glutamate. It participates in amino-acid biosynthesis; L-histidine biosynthesis; L-histidine from 5-phospho-alpha-D-ribose 1-diphosphate: step 7/9. The sequence is that of Histidinol-phosphate aminotransferase from Halobacterium salinarum (strain ATCC 29341 / DSM 671 / R1).